The chain runs to 147 residues: Small ribosomal subunit protein bS6 (147 aa).

The tract at residues 114–147 is disordered; that stretch reads GKGTRAAEQAAAAEAAAPAAAPAEPASAEPAPAV. Residues 119–147 are compositionally biased toward low complexity; the sequence is AAEQAAAAEAAAPAAAPAEPASAEPAPAV.

The protein belongs to the bacterial ribosomal protein bS6 family.

Its function is as follows. Binds together with bS18 to 16S ribosomal RNA. The protein is Small ribosomal subunit protein bS6 of Koribacter versatilis (strain Ellin345).